Consider the following 190-residue polypeptide: dCTP deaminase, dUMP-forming (190 aa).

DCTP contacts are provided by residues 101 to 106 (KSSLGR), Asp119, 127 to 129 (TLE), Gln148, Tyr162, and Gln174. The Proton donor/acceptor role is filled by Glu129. Residues 161 to 190 (PYGSSGVGSKYQGQRGPTPSRSYQNFIRST) are disordered. Polar residues predominate over residues 171–190 (YQGQRGPTPSRSYQNFIRST).

The protein belongs to the dCTP deaminase family. As to quaternary structure, homotrimer.

It carries out the reaction dCTP + 2 H2O = dUMP + NH4(+) + diphosphate. It functions in the pathway pyrimidine metabolism; dUMP biosynthesis; dUMP from dCTP: step 1/1. In terms of biological role, bifunctional enzyme that catalyzes both the deamination of dCTP to dUTP and the hydrolysis of dUTP to dUMP without releasing the toxic dUTP intermediate. The protein is dCTP deaminase, dUMP-forming of Mycobacterium marinum (strain ATCC BAA-535 / M).